The primary structure comprises 714 residues: Forkhead box protein P2 (714 aa).

Residues 1-28 (MMQESATETISNSSMNQNGMSTLSSQLD) show a composition bias toward polar residues. Disordered stretches follow at residues 1–45 (MMQE…SEVS) and 280–338 (DNGI…TGAS). Low complexity predominate over residues 291–304 (TTNNSSSTTSSTTS). Residues 314 to 323 (SIVNGQSSVL) show a composition bias toward polar residues. A compositionally biased stretch (basic and acidic residues) spans 325–336 (ARRDSSSHEETG). The C2H2-type zinc finger occupies 345-370 (GVCKWPGCESICEDFGQFLKHLNNEH). The tract at residues 387 to 408 (VQQLEIQLSKERERLQAMMTHL) is leucine-zipper. The segment at 421 to 425 (PLNLV) is CTBP1-binding. A compositionally biased stretch (low complexity) spans 437–458 (TSPQSLPQTPTTPTAPVTPITQ). Residues 437 to 464 (TSPQSLPQTPTTPTAPVTPITQGPSVIT) are disordered. Residues 503–593 (RPPFTYATLI…SQKITGSPTL (91 aa)) constitute a DNA-binding region (fork-head). 2 disordered regions span residues 648–667 (LDHI…QPHI) and 677–714 (VIAE…EDLE). Over residues 698 to 714 (LEDDREIEEEPLSEDLE) the composition is skewed to acidic residues.

Forms homodimers and heterodimers with FOXP1 and FOXP4. Dimerization is required for DNA-binding. Interacts with CTBP1. Interacts with FOXP1. Interacts with TBR1. Interacts with ZMYM2. As to expression, highest expression in lung. Lower expression in spleen, skeletal muscle, brain, kidney and small intestine.

The protein localises to the nucleus. Its function is as follows. Transcriptional repressor that may play a role in the specification and differentiation of lung epithelium. May also play a role in developing neural, gastrointestinal and cardiovascular tissues. Can act with CTBP1 to synergistically repress transcription but CTPBP1 is not essential. Plays a role in synapse formation by regulating SRPX2 levels. The sequence is that of Forkhead box protein P2 (Foxp2) from Mus musculus (Mouse).